The sequence spans 327 residues: Ribosomal RNA large subunit methyltransferase F (327 aa).

A disordered region spans residues 1 to 31 (MTHPVTPKNTTRPTPANKPAASTLHPRNPHQ).

This sequence belongs to the methyltransferase superfamily. METTL16/RlmF family.

The protein resides in the cytoplasm. The catalysed reaction is adenosine(1618) in 23S rRNA + S-adenosyl-L-methionine = N(6)-methyladenosine(1618) in 23S rRNA + S-adenosyl-L-homocysteine + H(+). Functionally, specifically methylates the adenine in position 1618 of 23S rRNA. The sequence is that of Ribosomal RNA large subunit methyltransferase F from Psychrobacter sp. (strain PRwf-1).